We begin with the raw amino-acid sequence, 453 residues long: Bifunctional protein GlmU (453 aa).

Residues 1–226 are pyrophosphorylase; the sequence is MSLNVVILAA…AMEVEGANNR (226 aa). UDP-N-acetyl-alpha-D-glucosamine-binding positions include 8–11, lysine 22, glutamine 73, 78–79, 100–102, glycine 137, glutamate 151, asparagine 166, and asparagine 224; these read LAAG, GT, and YGD. Position 102 (aspartate 102) interacts with Mg(2+). Asparagine 224 lines the Mg(2+) pocket. A linker region spans residues 227-247; it reads VQLAQLERSYQKMQAERLMIA. The interval 248–453 is N-acetyltransferase; the sequence is GATLIDPARF…QNWARPVKKK (206 aa). UDP-N-acetyl-alpha-D-glucosamine is bound by residues arginine 330 and lysine 348. Histidine 360 serves as the catalytic Proton acceptor. Positions 363 and 374 each coordinate UDP-N-acetyl-alpha-D-glucosamine. Acetyl-CoA contacts are provided by residues alanine 377, 383–384, serine 402, alanine 420, and arginine 437; that span reads NY.

The protein in the N-terminal section; belongs to the N-acetylglucosamine-1-phosphate uridyltransferase family. This sequence in the C-terminal section; belongs to the transferase hexapeptide repeat family. As to quaternary structure, homotrimer. Mg(2+) is required as a cofactor.

The protein localises to the cytoplasm. It carries out the reaction alpha-D-glucosamine 1-phosphate + acetyl-CoA = N-acetyl-alpha-D-glucosamine 1-phosphate + CoA + H(+). It catalyses the reaction N-acetyl-alpha-D-glucosamine 1-phosphate + UTP + H(+) = UDP-N-acetyl-alpha-D-glucosamine + diphosphate. Its pathway is nucleotide-sugar biosynthesis; UDP-N-acetyl-alpha-D-glucosamine biosynthesis; N-acetyl-alpha-D-glucosamine 1-phosphate from alpha-D-glucosamine 6-phosphate (route II): step 2/2. The protein operates within nucleotide-sugar biosynthesis; UDP-N-acetyl-alpha-D-glucosamine biosynthesis; UDP-N-acetyl-alpha-D-glucosamine from N-acetyl-alpha-D-glucosamine 1-phosphate: step 1/1. It participates in bacterial outer membrane biogenesis; LPS lipid A biosynthesis. Its function is as follows. Catalyzes the last two sequential reactions in the de novo biosynthetic pathway for UDP-N-acetylglucosamine (UDP-GlcNAc). The C-terminal domain catalyzes the transfer of acetyl group from acetyl coenzyme A to glucosamine-1-phosphate (GlcN-1-P) to produce N-acetylglucosamine-1-phosphate (GlcNAc-1-P), which is converted into UDP-GlcNAc by the transfer of uridine 5-monophosphate (from uridine 5-triphosphate), a reaction catalyzed by the N-terminal domain. This Aeromonas hydrophila subsp. hydrophila (strain ATCC 7966 / DSM 30187 / BCRC 13018 / CCUG 14551 / JCM 1027 / KCTC 2358 / NCIMB 9240 / NCTC 8049) protein is Bifunctional protein GlmU.